We begin with the raw amino-acid sequence, 1501 residues long: Protein SNQ2 (1501 aa).

The segment covering 1–17 has biased composition (polar residues); it reads MSNIKSTQDSSHNAVAR. Residues 1 to 56 form a disordered region; it reads MSNIKSTQDSSHNAVARSSSASFAASEESFTGITHDKDEQSDTPADKLTKMLTGPA. Ser-2 bears the N-acetylserine mark. A compositionally biased stretch (low complexity) spans 18-30; sequence SSSASFAASEESF. Phosphoserine is present on residues Ser-26 and Ser-29. A compositionally biased stretch (basic and acidic residues) spans 34–49; it reads THDKDEQSDTPADKLT. Residues Ser-64, Ser-80, and Ser-86 each carry the phosphoserine modification. An ABC transporter 1 domain is found at 161–410; it reads FKGIKAKRHQ…FAKMGYLCPP (250 aa). Asn-273, Asn-334, and Asn-518 each carry an N-linked (GlcNAc...) asparagine glycan. 5 consecutive transmembrane segments (helical) span residues 521 to 541, 554 to 574, 600 to 620, 628 to 648, and 664 to 680; these read YTVI…SLFY, GGVL…NISF, LASF…LFFL, GSFF…NGLF, and ISGI…TYMI. An N-linked (GlcNAc...) asparagine glycan is attached at Asn-730. Residues 771–789 form a helical membrane-spanning segment; sequence FGILWCFLLGYVVLKVIFT. An ABC transporter 2 domain is found at 853–1095; it reads FIWKDVCFTI…ILNYFERNGA (243 aa). Asn-874 is a glycosylation site (N-linked (GlcNAc...) asparagine). 889–896 is a binding site for ATP; that stretch reads GESGAGKT. Thr-1153 carries the phosphothreonine modification. A run of 4 helical transmembrane segments spans residues 1190-1212, 1216-1236, 1277-1296, and 1333-1352; these read IMSK…FNVG, VGLQ…APAM, HLFF…RIFF, and ANVI…GVTQ. Asn-1401 carries N-linked (GlcNAc...) asparagine glycosylation. The chain crosses the membrane as a helical span at residues 1455 to 1475; it reads FGIFWIYIFFNIIAMVCVYYL.

The protein belongs to the ABC transporter superfamily. ABCG family. PDR (TC 3.A.1.205) subfamily.

The protein localises to the membrane. Its function is as follows. Could be an ATP-dependent permease. Confers hyper-resistance to the mutagens 4-nitroquinoline-N-oxide (4-NQO) and triaziquone, as well as to the chemicals sulphomethuron methyl phenanthroline when present in multiple copies. Exhibits nucleoside triphosphatase activity. This is Protein SNQ2 (SNQ2) from Saccharomyces cerevisiae (strain ATCC 204508 / S288c) (Baker's yeast).